Consider the following 374-residue polypeptide: Probable quinol oxidase subunit 2 (374 aa).

The N-terminal stretch at 1–19 (MSKFKSLLLLFGTLILLSG) is a signal peptide. A lipid anchor (N-palmitoyl cysteine) is attached at C20. C20 carries S-diacylglycerol cysteine lipidation. Transmembrane regions (helical) follow at residues 43–63 (SIIF…IFIF) and 82–102 (IETI…IPTV). The tract at residues 317-374 (ERHGMKPMILGNNEKYDNEFKKEEDHNSKEMEKISKGAKDENASKLHKKEHDDHGGGH) is disordered. Basic and acidic residues predominate over residues 330 to 374 (EKYDNEFKKEEDHNSKEMEKISKGAKDENASKLHKKEHDDHGGGH).

This sequence belongs to the cytochrome c oxidase subunit 2 family.

It is found in the cell membrane. The enzyme catalyses 2 a quinol + O2 = 2 a quinone + 2 H2O. In terms of biological role, catalyzes quinol oxidation with the concomitant reduction of oxygen to water. Subunit II transfers the electrons from a quinol to the binuclear center of the catalytic subunit I. This is Probable quinol oxidase subunit 2 (qoxA) from Staphylococcus epidermidis (strain ATCC 12228 / FDA PCI 1200).